The primary structure comprises 112 residues: Prothymosin alpha-B (112 aa).

Positions 1 to 112 are disordered; sequence MSDTAVDASV…TKKQKTDEDD (112 aa). The span at 9–35 shows a compositional bias: basic and acidic residues; sequence SVEKSTKDLKAKEKEVVEEAENGKDKP. 2 stretches are compositionally biased toward acidic residues: residues 41 to 83 and 92 to 101; these read ENEE…DEVE and EDDEDDDDDV. A compositionally biased stretch (basic and acidic residues) spans 102 to 112; the sequence is ETKKQKTDEDD.

Belongs to the pro/parathymosin family.

Its subcellular location is the nucleus. The chain is Prothymosin alpha-B (ptma-b) from Xenopus laevis (African clawed frog).